The primary structure comprises 534 residues: Cytochrome P450 monooxygenase btcB (534 aa).

The N-linked (GlcNAc...) asparagine glycan is linked to asparagine 20. A helical transmembrane segment spans residues 41–61 (ALAFLCGALLFGFVYSVFYNL). N-linked (GlcNAc...) asparagine glycosylation is found at asparagine 335, asparagine 413, and asparagine 431. Residue cysteine 484 participates in heme binding.

The protein belongs to the cytochrome P450 family. Requires heme as cofactor.

The protein localises to the membrane. The protein operates within secondary metabolite biosynthesis; terpenoid biosynthesis. Cytochrome P4590 monooxygenase part of the gene cluster that mediates the biosynthesis of betaestacins. The bifunctional terpene synthase btcA converts isopentenyl diphosphate (IPP) and dimethylallyl diphosphate (DMAPP) into the sesterterpene betaestacin I. The C-terminal prenyltransferase (PT) domain of btcA catalyzes formation of GFPP, whereas the N-terminal terpene cyclase (TC) domain catalyzes the cyclization of GFPP into betaestacin I. The cytochrome P450 monooxygenase btcB oxidizes the C25 methyl group of betaestacin I to yield the carboxylic acid betaestacin IV via the alcohol betaestacin III. The cytochrome P450 monooxygenase btcC further catalyzes the multistep oxidation of betaestacin IV to produce several compounds, including betaestacins Va, Vb, Vc and VI. This chain is Cytochrome P450 monooxygenase btcB, found in Colletotrichum orbiculare (strain 104-T / ATCC 96160 / CBS 514.97 / LARS 414 / MAFF 240422) (Cucumber anthracnose fungus).